We begin with the raw amino-acid sequence, 877 residues long: DNA (cytosine-5)-methyltransferase 3A (877 aa).

3 disordered regions span residues 1-154, 194-250, and 412-431; these read MVES…MQRH, EETP…PEYE, and AYAP…EKPK. Composition is skewed to basic and acidic residues over residues 107-133 and 195-206; these read KLLE…EGSR and ETPRAEPQKEEE. Over residues 210 to 225 the composition is skewed to polar residues; it reads PASQQPTDPASPNVAT. The 59-residue stretch at 226–284 folds into the PWWP domain; sequence TPEPVVADAVDKNTSKSADDEPEYEDGRGLGIGELVWGKLRGFSWWPGRIVSWWMTGRS. Positions 234–244 are enriched in basic and acidic residues; that stretch reads AVDKNTSKSAD. The ADD domain occupies 447–579; that stretch reads EVRQKCRNIE…LQMFFANNHD (133 aa). The segment at 458-488 adopts a GATA-type; atypical zinc-finger fold; that stretch reads ICISCGSLNVTLEHPLFIGGMCQNCKNCFLE. The PHD-type; atypical zinc finger occupies 499–555; that stretch reads QSYCTICCGGREVLMCGNNNCCRCFCVECVDLLVGPGAAQAAIKEDPWNCYMCGHKG. Positions 599–877 constitute an SAM-dependent MTase C5-type domain; it reads IRVLSLFDGI…APLKEYFACV (279 aa). S-adenosyl-L-methionine contacts are provided by residues 606–610, Glu629, and 651–653; these read DGIAT and DVR. Cys675 is an active-site residue. 856 to 858 lines the S-adenosyl-L-methionine pocket; the sequence is RSW.

Belongs to the class I-like SAM-binding methyltransferase superfamily. C5-methyltransferase family.

It localises to the nucleus. The protein resides in the chromosome. The protein localises to the cytoplasm. The enzyme catalyses a 2'-deoxycytidine in DNA + S-adenosyl-L-methionine = a 5-methyl-2'-deoxycytidine in DNA + S-adenosyl-L-homocysteine + H(+). It carries out the reaction L-cysteinyl-[protein] + S-adenosyl-L-methionine = S-methyl-L-cysteinyl-[protein] + S-adenosyl-L-homocysteine + H(+). Its function is as follows. Required for genome-wide de novo methylation and is essential for development. DNA methylation is coordinated with methylation of histones. It modifies DNA in a non-processive manner and also methylates non-CpG sites. Acts as a transcriptional corepressor for ZNF238. Can actively repress transcription through the recruitment of HDAC activity. Also has weak auto-methylation activity on some Cys residue in absence of DNA. The polypeptide is DNA (cytosine-5)-methyltransferase 3A (DNMT3A) (Gallus gallus (Chicken)).